Reading from the N-terminus, the 566-residue chain is Oxygen-dependent choline dehydrogenase (566 aa).

Position 7–36 (7–36 (DYIICGAGSAGNVLATRLTEDPNVTVLLLE)) interacts with FAD. Positions 185-204 (EGFGPMDRTVTPKGRRASTA) are disordered. Catalysis depends on histidine 474, which acts as the Proton acceptor.

Belongs to the GMC oxidoreductase family. The cofactor is FAD.

It carries out the reaction choline + A = betaine aldehyde + AH2. The enzyme catalyses betaine aldehyde + NAD(+) + H2O = glycine betaine + NADH + 2 H(+). It participates in amine and polyamine biosynthesis; betaine biosynthesis via choline pathway; betaine aldehyde from choline (cytochrome c reductase route): step 1/1. Its function is as follows. Involved in the biosynthesis of the osmoprotectant glycine betaine. Catalyzes the oxidation of choline to betaine aldehyde and betaine aldehyde to glycine betaine at the same rate. The chain is Oxygen-dependent choline dehydrogenase from Burkholderia vietnamiensis (strain G4 / LMG 22486) (Burkholderia cepacia (strain R1808)).